The sequence spans 445 residues: Acetylcholine-gated chloride channel subunit acc-2 (445 aa).

Residues 1-26 (MIFTLLSTLPVLIITTELDYSELVHS) form the signal peptide. Residues 27–258 (AELVSSSSYI…LHVTIIFERR (232 aa)) are Extracellular-facing. 4 N-linked (GlcNAc...) asparagine glycosylation sites follow: Asn-46, Asn-59, Asn-121, and Asn-162. The cysteines at positions 177 and 191 are disulfide-linked. Asn-218 carries N-linked (GlcNAc...) asparagine glycosylation. The helical transmembrane segment at 259–279 (FIWYFMQAYLPTYLTIFISWI) threads the bilayer. The Cytoplasmic portion of the chain corresponds to 280–286 (SFSLGSR). The chain crosses the membrane as a helical span at residues 287 to 307 (AIPARTMLGVNSLLAIVFSFG). The Extracellular segment spans residues 308–326 (NIMRNLPRVSYIKGIDVWM). The chain crosses the membrane as a helical span at residues 327 to 347 (LVSMTFIFCSLLELAIVGFMV). Over 348 to 407 (RDETVAKKKQQKKISGNISREESPHGIISERRFMFPPGCSESSKSLSSCTSGWTPERIDS) the chain is Cytoplasmic. Residues 408–428 (ISSVMFPFSFFVFNIIYWFYY) traverse the membrane as a helical segment. At 429-445 (IHRKEIIKQNLINRVDG) the chain is on the extracellular side.

Belongs to the ligand-gated ion channel (TC 1.A.9) family. In terms of assembly, homopentamer (in vitro). May interact with either acc-3 or acc-4; the interactions do not result in significant heteropentameric ion channel activity. As to expression, expressed in RIA, RIG, PHA and AIZ glutamatergic neurons, URX and RIH cholinergic neurons, and in male-specific MCM neurons.

The protein resides in the cell membrane. Functionally, acetylcholine-gated chloride channel subunit. Currents in channels are triggered in response to acetylcholine. Channel properties may be modulated by the formation of homomeric and heteromeric channels. In Caenorhabditis elegans, this protein is Acetylcholine-gated chloride channel subunit acc-2.